The primary structure comprises 72 residues: MAVPKRRQSNAQSGMRAATWKRKALDAARNALSLGKSLTTRKSTGFYYPPAPVSENWDDEAKGFGKDLDAAE.

The segment at 49 to 72 (PPAPVSENWDDEAKGFGKDLDAAE) is disordered. Over residues 59-72 (DEAKGFGKDLDAAE) the composition is skewed to basic and acidic residues.

This sequence belongs to the bacterial ribosomal protein bL32 family.

Its subcellular location is the plastid. The protein resides in the chloroplast. The chain is Large ribosomal subunit protein bL32c from Ostreococcus tauri.